The chain runs to 108 residues: UPF0060 membrane protein KPN78578_15550 (108 aa).

4 helical membrane passes run 6–26 (LLFFATALCEIVGCYLPWLWL), 29–49 (GATPLLLIPTALALALFVWLL), 61–81 (AAYGGVYVCTALLWLRVVDGV), and 86–106 (YDWAGAAIALCGMLIIVAGWG).

Belongs to the UPF0060 family.

The protein localises to the cell inner membrane. The polypeptide is UPF0060 membrane protein KPN78578_15550 (Klebsiella pneumoniae subsp. pneumoniae (strain ATCC 700721 / MGH 78578)).